We begin with the raw amino-acid sequence, 399 residues long: Bifunctional enzyme IspD/IspF (399 aa).

The tract at residues 1–239 is 2-C-methyl-D-erythritol 4-phosphate cytidylyltransferase; that stretch reads MHTWALLLAA…SSEKKNMQVP (239 aa). A 2-C-methyl-D-erythritol 2,4-cyclodiphosphate synthase region spans residues 240–399; that stretch reads CVGWGYDVHR…AVTALRRVSS (160 aa). The a divalent metal cation site is built by Asp-246 and His-248. 4-CDP-2-C-methyl-D-erythritol 2-phosphate-binding positions include 246-248 and 273-274; these read DVH and HS. A divalent metal cation is bound at residue His-281. 4-CDP-2-C-methyl-D-erythritol 2-phosphate contacts are provided by residues 295 to 297, 300 to 304, 371 to 374, and Phe-378; these read DIG, FPDTD, and TTEE.

It in the N-terminal section; belongs to the IspD/TarI cytidylyltransferase family. IspD subfamily. This sequence in the C-terminal section; belongs to the IspF family. It depends on a divalent metal cation as a cofactor.

It carries out the reaction 2-C-methyl-D-erythritol 4-phosphate + CTP + H(+) = 4-CDP-2-C-methyl-D-erythritol + diphosphate. It catalyses the reaction 4-CDP-2-C-methyl-D-erythritol 2-phosphate = 2-C-methyl-D-erythritol 2,4-cyclic diphosphate + CMP. It participates in isoprenoid biosynthesis; isopentenyl diphosphate biosynthesis via DXP pathway; isopentenyl diphosphate from 1-deoxy-D-xylulose 5-phosphate: step 2/6. It functions in the pathway isoprenoid biosynthesis; isopentenyl diphosphate biosynthesis via DXP pathway; isopentenyl diphosphate from 1-deoxy-D-xylulose 5-phosphate: step 4/6. Functionally, bifunctional enzyme that catalyzes the formation of 4-diphosphocytidyl-2-C-methyl-D-erythritol from CTP and 2-C-methyl-D-erythritol 4-phosphate (MEP) (IspD), and catalyzes the conversion of 4-diphosphocytidyl-2-C-methyl-D-erythritol 2-phosphate (CDP-ME2P) to 2-C-methyl-D-erythritol 2,4-cyclodiphosphate (ME-CPP) with a corresponding release of cytidine 5-monophosphate (CMP) (IspF). The polypeptide is Bifunctional enzyme IspD/IspF (Oleidesulfovibrio alaskensis (strain ATCC BAA-1058 / DSM 17464 / G20) (Desulfovibrio alaskensis)).